The chain runs to 269 residues: Hydroxyethylthiazole kinase (269 aa).

A substrate-binding site is contributed by M41. Residues R117 and S165 each coordinate ATP. A substrate-binding site is contributed by G192.

This sequence belongs to the Thz kinase family. Requires Mg(2+) as cofactor.

It catalyses the reaction 5-(2-hydroxyethyl)-4-methylthiazole + ATP = 4-methyl-5-(2-phosphooxyethyl)-thiazole + ADP + H(+). It participates in cofactor biosynthesis; thiamine diphosphate biosynthesis; 4-methyl-5-(2-phosphoethyl)-thiazole from 5-(2-hydroxyethyl)-4-methylthiazole: step 1/1. Its function is as follows. Catalyzes the phosphorylation of the hydroxyl group of 4-methyl-5-beta-hydroxyethylthiazole (THZ). This is Hydroxyethylthiazole kinase from Actinobacillus succinogenes (strain ATCC 55618 / DSM 22257 / CCUG 43843 / 130Z).